The primary structure comprises 1356 residues: DNA-directed RNA polymerase subunit beta (1356 aa).

Belongs to the RNA polymerase beta chain family. The RNAP catalytic core consists of 2 alpha, 1 beta, 1 beta' and 1 omega subunit. When a sigma factor is associated with the core the holoenzyme is formed, which can initiate transcription.

It carries out the reaction RNA(n) + a ribonucleoside 5'-triphosphate = RNA(n+1) + diphosphate. Its function is as follows. DNA-dependent RNA polymerase catalyzes the transcription of DNA into RNA using the four ribonucleoside triphosphates as substrates. This Phenylobacterium zucineum (strain HLK1) protein is DNA-directed RNA polymerase subunit beta.